Here is a 115-residue protein sequence, read N- to C-terminus: Somatostatin-2 (115 aa).

An N-terminal signal peptide occupies residues 1-18 (MKVCRIHCALALLGLALA). Residues 19-87 (ICSQGAASQP…KEDLRVELER (69 aa)) constitute a propeptide that is removed on maturation. C104 and C115 are oxidised to a cystine.

Belongs to the somatostatin family.

The protein localises to the secreted. Functionally, somatostatin inhibits the release of somatotropin. In Oncorhynchus mykiss (Rainbow trout), this protein is Somatostatin-2 (sst2).